The following is a 165-amino-acid chain: Urease accessory protein UreE (165 aa).

The segment at 137–156 is disordered; that stretch reads EAGAYQSAPHGHSHAHGHDH.

It belongs to the UreE family.

It is found in the cytoplasm. Involved in urease metallocenter assembly. Binds nickel. Probably functions as a nickel donor during metallocenter assembly. This chain is Urease accessory protein UreE, found in Pseudomonas putida (strain GB-1).